Consider the following 161-residue polypeptide: Allophycocyanin alpha subunit (161 aa).

Cysteine 81 provides a ligand contact to (2R,3E)-phycocyanobilin.

It belongs to the phycobiliprotein family. As to quaternary structure, heterodimer of an alpha and a beta chain. Post-translationally, contains one covalently linked phycocyanobilin chromophore. The chromophore on position 81 is added by the phycocyanobilin lyase CpcUS.

The protein localises to the cellular thylakoid membrane. Its function is as follows. Light-harvesting photosynthetic bile pigment-protein from the phycobiliprotein complex. Allophycocyanin has a maximum absorption at approximately 650 nanometers. This Picosynechococcus sp. (strain ATCC 27264 / PCC 7002 / PR-6) (Agmenellum quadruplicatum) protein is Allophycocyanin alpha subunit (apcA).